The following is a 372-amino-acid chain: Aminomethyltransferase (372 aa).

The protein belongs to the GcvT family. The glycine cleavage system is composed of four proteins: P, T, L and H.

The enzyme catalyses N(6)-[(R)-S(8)-aminomethyldihydrolipoyl]-L-lysyl-[protein] + (6S)-5,6,7,8-tetrahydrofolate = N(6)-[(R)-dihydrolipoyl]-L-lysyl-[protein] + (6R)-5,10-methylene-5,6,7,8-tetrahydrofolate + NH4(+). Its function is as follows. The glycine cleavage system catalyzes the degradation of glycine. The polypeptide is Aminomethyltransferase (Burkholderia ambifaria (strain MC40-6)).